Here is a 601-residue protein sequence, read N- to C-terminus: Elongation factor 4 (601 aa).

Residues 7–189 (SNIRNFSIVA…AIVHRLPPPQ (183 aa)) enclose the tr-type G domain. GTP is bound by residues 19-24 (DHGKST) and 136-139 (NKVD).

Belongs to the TRAFAC class translation factor GTPase superfamily. Classic translation factor GTPase family. LepA subfamily.

Its subcellular location is the cell inner membrane. The enzyme catalyses GTP + H2O = GDP + phosphate + H(+). Its function is as follows. Required for accurate and efficient protein synthesis under certain stress conditions. May act as a fidelity factor of the translation reaction, by catalyzing a one-codon backward translocation of tRNAs on improperly translocated ribosomes. Back-translocation proceeds from a post-translocation (POST) complex to a pre-translocation (PRE) complex, thus giving elongation factor G a second chance to translocate the tRNAs correctly. Binds to ribosomes in a GTP-dependent manner. This Rhodopseudomonas palustris (strain BisB18) protein is Elongation factor 4.